A 78-amino-acid chain; its full sequence is Probable cytochrome c oxidase subunit 6B (78 aa).

Residues 21 to 64 (TKHCWANYVDYYGCVKHYNGDNSKCQTFFNSMNSLCPAAWISEW) enclose the CHCH domain. Residues 24-34 (CWANYVDYYGC) carry the Cx9C motif motif. Disulfide bonds link Cys24–Cys56 and Cys34–Cys45. The short motif at 45–56 (CQTFFNSMNSLC) is the Cx10C motif element.

This sequence belongs to the cytochrome c oxidase subunit 6B family. In terms of assembly, component of the cytochrome c oxidase (complex IV, CIV), a multisubunit enzyme composed of a catalytic core of 3 subunits and several supernumerary subunits. The complex exists as a monomer or a dimer and forms supercomplexes (SCs) in the inner mitochondrial membrane with ubiquinol-cytochrome c oxidoreductase (cytochrome b-c1 complex, complex III, CIII).

It localises to the mitochondrion inner membrane. Its pathway is energy metabolism; oxidative phosphorylation. Its function is as follows. Component of the cytochrome c oxidase, the last enzyme in the mitochondrial electron transport chain which drives oxidative phosphorylation. The respiratory chain contains 3 multisubunit complexes succinate dehydrogenase (complex II, CII), ubiquinol-cytochrome c oxidoreductase (cytochrome b-c1 complex, complex III, CIII) and cytochrome c oxidase (complex IV, CIV), that cooperate to transfer electrons derived from NADH and succinate to molecular oxygen, creating an electrochemical gradient over the inner membrane that drives transmembrane transport and the ATP synthase. Cytochrome c oxidase is the component of the respiratory chain that catalyzes the reduction of oxygen to water. Electrons originating from reduced cytochrome c in the intermembrane space (IMS) are transferred via the dinuclear copper A center (CU(A)) of subunit 2 and heme A of subunit 1 to the active site in subunit 1, a binuclear center (BNC) formed by heme A3 and copper B (CU(B)). The BNC reduces molecular oxygen to 2 water molecules using 4 electrons from cytochrome c in the IMS and 4 protons from the mitochondrial matrix. This chain is Probable cytochrome c oxidase subunit 6B, found in Dictyostelium discoideum (Social amoeba).